A 91-amino-acid chain; its full sequence is Small ribosomal subunit protein bS20 (91 aa).

The protein belongs to the bacterial ribosomal protein bS20 family.

In terms of biological role, binds directly to 16S ribosomal RNA. The polypeptide is Small ribosomal subunit protein bS20 (Caulobacter sp. (strain K31)).